The chain runs to 754 residues: uncharacterized protein (754 aa).

The tract at residues 1-110 (MNKGQNQVVP…RNMLGSLQKT (110 aa)) is disordered. A compositionally biased stretch (polar residues) spans 15 to 25 (FGGQNPPQLSS). Residues 26–35 (IPPIVNPVVV) are compositionally biased toward low complexity. The span at 36–46 (QNRTSPGTPFI) shows a compositional bias: polar residues. Over residues 49–60 (KAKEIYNRRQQE) the composition is skewed to basic and acidic residues. Residues 62–72 (ISSDSEEEESP) are compositionally biased toward acidic residues. The span at 76–93 (AKSKYSRDSRDSRDTRDS) shows a compositional bias: basic and acidic residues.

Its subcellular location is the virion. This is an uncharacterized protein from Acanthamoeba polyphaga mimivirus (APMV).